The following is a 118-amino-acid chain: MTDLIPLEQAHCLPRKGSDHKLGEARLAELLPQVPGWELAESGMAITRTFRFADYYRTLAFVNALAWIAHREDHHPDLGVHYDRVVVRYSTHDVGGLSENDFICAAKAAQLFDQGITA.

The protein belongs to the pterin-4-alpha-carbinolamine dehydratase family.

The catalysed reaction is (4aS,6R)-4a-hydroxy-L-erythro-5,6,7,8-tetrahydrobiopterin = (6R)-L-erythro-6,7-dihydrobiopterin + H2O. This Xanthomonas campestris pv. campestris (strain B100) protein is Putative pterin-4-alpha-carbinolamine dehydratase.